The chain runs to 325 residues: Histone-lysine N-methyltransferase ATXR4 (325 aa).

Positions 1-30 are cleaved as a signal peptide; that stretch reads MSRLALNRYSRCFSRLKTLTTPLFFSSSAA. An SET domain is found at 42–295; it reads PPIRVGLTES…EGEELRICYI (254 aa).

It belongs to the class V-like SAM-binding methyltransferase superfamily. Histone-lysine methyltransferase family. TRX/MLL subfamily.

It localises to the nucleus. It carries out the reaction L-lysyl-[histone] + S-adenosyl-L-methionine = N(6)-methyl-L-lysyl-[histone] + S-adenosyl-L-homocysteine + H(+). Histone methyltransferase. This chain is Histone-lysine N-methyltransferase ATXR4 (ATXR4), found in Arabidopsis thaliana (Mouse-ear cress).